A 317-amino-acid polypeptide reads, in one-letter code: Heme A synthase (317 aa).

The Cytoplasmic portion of the chain corresponds to Met-1–Lys-6. A helical transmembrane segment spans residues Trp-7–Thr-27. At Lys-28 to Arg-62 the chain is on the extracellular side. A disulfide bridge connects residues Cys-35 and Cys-42. Glu-58 is a catalytic residue. His-61 serves as a coordination point for heme o. The helical transmembrane segment at Leu-63–Ile-83 threads the bilayer. Residues Gly-84 to Lys-90 lie on the Cytoplasmic side of the membrane. Residues Phe-91–Val-111 form a helical membrane-spanning segment. At Val-112–Ala-121 the chain is on the extracellular side. A helical transmembrane segment spans residues Leu-122–Phe-142. His-123 provides a ligand contact to heme o. At Glu-143–Met-159 the chain is on the cytoplasmic side. A helical membrane pass occupies residues Arg-160–Val-180. Topologically, residues Arg-181–Met-211 are extracellular. Cys-189 and Cys-195 are disulfide-bonded. A helical membrane pass occupies residues Gly-212–Val-232. Residue His-213 coordinates heme b. Topologically, residues Arg-233 to Tyr-243 are cytoplasmic. The chain crosses the membrane as a helical span at residues Gly-244–Phe-264. Topologically, residues Thr-265–Tyr-270 are extracellular. A helical transmembrane segment spans residues Ile-271–Leu-291. His-275 is a binding site for heme b. At Leu-292–Lys-317 the chain is on the cytoplasmic side.

The protein belongs to the COX15/CtaA family. Type 1 subfamily. In terms of assembly, interacts with CtaB. Requires heme b as cofactor.

It is found in the cell membrane. It catalyses the reaction Fe(II)-heme o + 2 A + H2O = Fe(II)-heme a + 2 AH2. Its pathway is porphyrin-containing compound metabolism; heme A biosynthesis; heme A from heme O: step 1/1. Its function is as follows. Catalyzes the conversion of heme O to heme A by two successive hydroxylations of the methyl group at C8. The first hydroxylation forms heme I, the second hydroxylation results in an unstable dihydroxymethyl group, which spontaneously dehydrates, resulting in the formyl group of heme A. The protein is Heme A synthase of Geobacillus kaustophilus (strain HTA426).